We begin with the raw amino-acid sequence, 90 residues long: RNA-binding protein Hfq (90 aa).

Residues 9–68 (DPFLNALRRERVPVSIYLVNGIKLQGQVESFDQFVILLKNTVSQMVYKHAISTVVPARPF) form the Sm domain. Positions 71 to 90 (TGHQNAQGGYGPQDDVPSGE) are disordered.

It belongs to the Hfq family. In terms of assembly, homohexamer.

Its function is as follows. RNA chaperone that binds small regulatory RNA (sRNAs) and mRNAs to facilitate mRNA translational regulation in response to envelope stress, environmental stress and changes in metabolite concentrations. Also binds with high specificity to tRNAs. This is RNA-binding protein Hfq from Shewanella putrefaciens (strain CN-32 / ATCC BAA-453).